The sequence spans 201 residues: FMN-dependent NADH:quinone oxidoreductase (201 aa).

FMN is bound by residues 92-95 (MWNL) and 136-139 (STGG).

The protein belongs to the azoreductase type 1 family. As to quaternary structure, homodimer. FMN serves as cofactor.

It catalyses the reaction 2 a quinone + NADH + H(+) = 2 a 1,4-benzosemiquinone + NAD(+). The catalysed reaction is N,N-dimethyl-1,4-phenylenediamine + anthranilate + 2 NAD(+) = 2-(4-dimethylaminophenyl)diazenylbenzoate + 2 NADH + 2 H(+). Functionally, quinone reductase that provides resistance to thiol-specific stress caused by electrophilic quinones. Its function is as follows. Also exhibits azoreductase activity. Catalyzes the reductive cleavage of the azo bond in aromatic azo compounds to the corresponding amines. In Coprothermobacter proteolyticus (strain ATCC 35245 / DSM 5265 / OCM 4 / BT), this protein is FMN-dependent NADH:quinone oxidoreductase.